Here is a 190-residue protein sequence, read N- to C-terminus: Lipid A acyltransferase PagP (190 aa).

Residues 1-18 (MKRLISCLTIICALNASA) form the signal peptide. Active-site residues include His60, Asp103, and Ser104.

The protein belongs to the lipid A palmitoyltransferase family. Homodimer.

The protein resides in the cell outer membrane. It carries out the reaction a lipid A + a 1,2-diacyl-sn-glycero-3-phosphocholine = a hepta-acyl lipid A + a 2-acyl-sn-glycero-3-phosphocholine. It catalyses the reaction a lipid IVA + a 1,2-diacyl-sn-glycero-3-phosphocholine = a lipid IVB + a 2-acyl-sn-glycero-3-phosphocholine. The catalysed reaction is a lipid IIA + a 1,2-diacyl-sn-glycero-3-phosphocholine = a lipid IIB + a 2-acyl-sn-glycero-3-phosphocholine. Functionally, transfers a fatty acid residue from the sn-1 position of a phospholipid to the N-linked hydroxyfatty acid chain on the proximal unit of lipid A or its precursors. The chain is Lipid A acyltransferase PagP from Legionella pneumophila (strain Paris).